The following is a 689-amino-acid chain: Elongation factor G (689 aa).

Residues 8–282 (KKTRNIGIMA…AVIDYLPSPV (275 aa)) enclose the tr-type G domain. GTP contacts are provided by residues 17-24 (AHIDAGKT), 81-85 (DTPGH), and 135-138 (NKMD).

It belongs to the TRAFAC class translation factor GTPase superfamily. Classic translation factor GTPase family. EF-G/EF-2 subfamily.

The protein localises to the cytoplasm. Functionally, catalyzes the GTP-dependent ribosomal translocation step during translation elongation. During this step, the ribosome changes from the pre-translocational (PRE) to the post-translocational (POST) state as the newly formed A-site-bound peptidyl-tRNA and P-site-bound deacylated tRNA move to the P and E sites, respectively. Catalyzes the coordinated movement of the two tRNA molecules, the mRNA and conformational changes in the ribosome. This Halothermothrix orenii (strain H 168 / OCM 544 / DSM 9562) protein is Elongation factor G.